Consider the following 494-residue polypeptide: Glutamyl-tRNA(Gln) amidotransferase subunit A (494 aa).

Catalysis depends on charge relay system residues Lys-79 and Ser-159. Residue Ser-183 is the Acyl-ester intermediate of the active site.

This sequence belongs to the amidase family. GatA subfamily. Heterotrimer of A, B and C subunits.

The enzyme catalyses L-glutamyl-tRNA(Gln) + L-glutamine + ATP + H2O = L-glutaminyl-tRNA(Gln) + L-glutamate + ADP + phosphate + H(+). Allows the formation of correctly charged Gln-tRNA(Gln) through the transamidation of misacylated Glu-tRNA(Gln) in organisms which lack glutaminyl-tRNA synthetase. The reaction takes place in the presence of glutamine and ATP through an activated gamma-phospho-Glu-tRNA(Gln). The protein is Glutamyl-tRNA(Gln) amidotransferase subunit A of Bartonella bacilliformis (strain ATCC 35685 / KC583 / Herrer 020/F12,63).